A 135-amino-acid chain; its full sequence is Lactoylglutathione lyase (135 aa).

The 125-residue stretch at 2-126 (RLLHTMLRVG…DGYKIELIEA (125 aa)) folds into the VOC domain. Residue His5 coordinates Ni(2+). Substrate is bound at residue Arg9. Residue Glu56 coordinates Ni(2+). 2 residues coordinate substrate: Asn60 and His74. Ni(2+) is bound by residues His74 and Glu122. The active-site Proton donor/acceptor is Glu122.

The protein belongs to the glyoxalase I family. Homodimer. Requires Ni(2+) as cofactor.

It carries out the reaction (R)-S-lactoylglutathione = methylglyoxal + glutathione. The protein operates within secondary metabolite metabolism; methylglyoxal degradation; (R)-lactate from methylglyoxal: step 1/2. Catalyzes the conversion of hemimercaptal, formed from methylglyoxal and glutathione, to S-lactoylglutathione. The protein is Lactoylglutathione lyase (gloA) of Salmonella typhi.